The sequence spans 253 residues: DNA polymerase sliding clamp (253 aa).

Belongs to the PCNA family. In terms of assembly, homotrimer. The subunits circularize to form a toroid; DNA passes through its center. Replication factor C (RFC) is required to load the toroid on the DNA.

Its function is as follows. Sliding clamp subunit that acts as a moving platform for DNA processing. Responsible for tethering the catalytic subunit of DNA polymerase and other proteins to DNA during high-speed replication. The sequence is that of DNA polymerase sliding clamp from Methanopyrus kandleri (strain AV19 / DSM 6324 / JCM 9639 / NBRC 100938).